The primary structure comprises 538 residues: 2-isopropylmalate synthase (538 aa).

Residues 6 to 277 (LIIFDTTLRD…DSTVPLSTID (272 aa)) form the Pyruvate carboxyltransferase domain. 4 residues coordinate Mn(2+): Asp15, His206, His208, and Asn242. A regulatory domain region spans residues 406–538 (RLEQVQVSCG…AHPDAAAQKL (133 aa)).

The protein belongs to the alpha-IPM synthase/homocitrate synthase family. LeuA type 1 subfamily. In terms of assembly, homodimer. Mn(2+) is required as a cofactor.

It is found in the cytoplasm. The catalysed reaction is 3-methyl-2-oxobutanoate + acetyl-CoA + H2O = (2S)-2-isopropylmalate + CoA + H(+). It participates in amino-acid biosynthesis; L-leucine biosynthesis; L-leucine from 3-methyl-2-oxobutanoate: step 1/4. Functionally, catalyzes the condensation of the acetyl group of acetyl-CoA with 3-methyl-2-oxobutanoate (2-ketoisovalerate) to form 3-carboxy-3-hydroxy-4-methylpentanoate (2-isopropylmalate). The sequence is that of 2-isopropylmalate synthase from Gloeobacter violaceus (strain ATCC 29082 / PCC 7421).